The primary structure comprises 253 residues: Phycocyanobilin:ferredoxin oxidoreductase (253 aa).

It belongs to the HY2 family.

It carries out the reaction (2R,3Z)-phycocyanobilin + 4 oxidized [2Fe-2S]-[ferredoxin] = biliverdin IXalpha + 4 reduced [2Fe-2S]-[ferredoxin] + 4 H(+). Functionally, catalyzes the four-electron reduction of biliverdin IX-alpha (2-electron reduction at both the A and D rings); the reaction proceeds via an isolatable 2-electron intermediate, 181,182-dihydrobiliverdin. The sequence is that of Phycocyanobilin:ferredoxin oxidoreductase (pcyA) from Gloeobacter violaceus (strain ATCC 29082 / PCC 7421).